The sequence spans 70 residues: Large ribosomal subunit protein bL31 (70 aa).

Cys-16, Cys-18, Cys-37, and Cys-40 together coordinate Zn(2+).

The protein belongs to the bacterial ribosomal protein bL31 family. Type A subfamily. Part of the 50S ribosomal subunit. Zn(2+) is required as a cofactor.

Functionally, binds the 23S rRNA. This chain is Large ribosomal subunit protein bL31, found in Proteus mirabilis (strain HI4320).